Reading from the N-terminus, the 588-residue chain is Aspartate--tRNA ligase (588 aa).

Residue Glu-174 coordinates L-aspartate. The segment at 198 to 201 is aspartate; it reads QLFK. L-aspartate is bound at residue Arg-220. Residues 220–222 and Gln-229 contribute to the ATP site; that span reads RDE. L-aspartate is bound at residue His-448. Residue Glu-482 coordinates ATP. Arg-489 is an L-aspartate binding site. 534-537 provides a ligand contact to ATP; the sequence is GIDR.

The protein belongs to the class-II aminoacyl-tRNA synthetase family. Type 1 subfamily. Homodimer.

It is found in the cytoplasm. It catalyses the reaction tRNA(Asp) + L-aspartate + ATP = L-aspartyl-tRNA(Asp) + AMP + diphosphate. In terms of biological role, catalyzes the attachment of L-aspartate to tRNA(Asp) in a two-step reaction: L-aspartate is first activated by ATP to form Asp-AMP and then transferred to the acceptor end of tRNA(Asp). This Xanthomonas euvesicatoria pv. vesicatoria (strain 85-10) (Xanthomonas campestris pv. vesicatoria) protein is Aspartate--tRNA ligase.